Reading from the N-terminus, the 150-residue chain is Depactin (150 aa).

The ADF-H domain occupies 3 to 148 (SGTALDENVK…SEEAIGDKIK (146 aa)).

The protein belongs to the actin-binding proteins ADF family.

Depactin interacts with actin at some of its 12 N-terminal residues and 20 C-terminal residues. Binds to actin monomers from filaments and in solution. The polypeptide is Depactin (Asterias amurensis (Northern Pacific seastar)).